A 148-amino-acid chain; its full sequence is Transcriptional regulator MraZ (148 aa).

SpoVT-AbrB domains lie at 5–53 and 82–125; these read ETAI…AEKE and SAVL…SEQA.

It belongs to the MraZ family. Forms oligomers.

The protein resides in the cytoplasm. Its subcellular location is the nucleoid. This Xanthomonas oryzae pv. oryzae (strain MAFF 311018) protein is Transcriptional regulator MraZ.